A 431-amino-acid polypeptide reads, in one-letter code: Enolase (431 aa).

A (2R)-2-phosphoglycerate-binding site is contributed by Gln166. The active-site Proton donor is the Glu208. Residues Asp245, Glu288, and Asp315 each coordinate Mg(2+). Residues Lys340, Arg369, Ser370, and Lys391 each contribute to the (2R)-2-phosphoglycerate site. Lys340 serves as the catalytic Proton acceptor.

This sequence belongs to the enolase family. It depends on Mg(2+) as a cofactor.

Its subcellular location is the cytoplasm. It is found in the secreted. It localises to the cell surface. It catalyses the reaction (2R)-2-phosphoglycerate = phosphoenolpyruvate + H2O. The protein operates within carbohydrate degradation; glycolysis; pyruvate from D-glyceraldehyde 3-phosphate: step 4/5. Catalyzes the reversible conversion of 2-phosphoglycerate (2-PG) into phosphoenolpyruvate (PEP). It is essential for the degradation of carbohydrates via glycolysis. The polypeptide is Enolase (Clostridium acetobutylicum (strain ATCC 824 / DSM 792 / JCM 1419 / IAM 19013 / LMG 5710 / NBRC 13948 / NRRL B-527 / VKM B-1787 / 2291 / W)).